Here is a 239-residue protein sequence, read N- to C-terminus: Phosphoribosylaminoimidazole-succinocarboxamide synthase (239 aa).

This sequence belongs to the SAICAR synthetase family.

It catalyses the reaction 5-amino-1-(5-phospho-D-ribosyl)imidazole-4-carboxylate + L-aspartate + ATP = (2S)-2-[5-amino-1-(5-phospho-beta-D-ribosyl)imidazole-4-carboxamido]succinate + ADP + phosphate + 2 H(+). It functions in the pathway purine metabolism; IMP biosynthesis via de novo pathway; 5-amino-1-(5-phospho-D-ribosyl)imidazole-4-carboxamide from 5-amino-1-(5-phospho-D-ribosyl)imidazole-4-carboxylate: step 1/2. The polypeptide is Phosphoribosylaminoimidazole-succinocarboxamide synthase (Psychrobacter sp. (strain PRwf-1)).